The following is a 258-amino-acid chain: Snake venom serine protease (258 aa).

The N-terminal stretch at 1–18 (MVLIRVLANLLILQLSYA) is a signal peptide. Positions 19-24 (QKSSEL) are excised as a propeptide. A Peptidase S1 domain is found at 25–249 (VIGGDECNIN…YTEWIQSILA (225 aa)). 6 disulfide bridges follow: cysteine 31–cysteine 163, cysteine 50–cysteine 66, cysteine 98–cysteine 256, cysteine 142–cysteine 210, cysteine 174–cysteine 189, and cysteine 200–cysteine 225. Catalysis depends on charge relay system residues histidine 65 and aspartate 110. The N-linked (GlcNAc...) asparagine glycan is linked to asparagine 154. Residue serine 204 is the Charge relay system of the active site.

The protein belongs to the peptidase S1 family. Snake venom subfamily. As to quaternary structure, monomer. In terms of tissue distribution, expressed by the venom gland.

Its subcellular location is the secreted. Snake venom serine protease that may act in the hemostasis system of the prey. The protein is Snake venom serine protease of Lachesis stenophrys (Central American bushmaster).